The following is a 325-amino-acid chain: RepFIB replication protein A (325 aa).

The disordered stretch occupies residues 279 to 298 (APNDESKENPLPPSPAEKVS).

The protein belongs to the initiator RepB protein family.

Its function is as follows. This protein is essential for plasmid replication; it is involved in copy control functions. In vitro, binds to the DNA repeat units, BCDD'D'', EFG and HIJ. This chain is RepFIB replication protein A (repB), found in Escherichia coli (strain K12).